The primary structure comprises 249 residues: Triosephosphate isomerase (249 aa).

9–11 (NWK) contacts substrate. H94 (electrophile) is an active-site residue. E166 functions as the Proton acceptor in the catalytic mechanism. Substrate-binding positions include G172, S211, and 232–233 (GG).

Belongs to the triosephosphate isomerase family. As to quaternary structure, homodimer.

Its subcellular location is the cytoplasm. The catalysed reaction is D-glyceraldehyde 3-phosphate = dihydroxyacetone phosphate. It participates in carbohydrate biosynthesis; gluconeogenesis. It functions in the pathway carbohydrate degradation; glycolysis; D-glyceraldehyde 3-phosphate from glycerone phosphate: step 1/1. Its function is as follows. Involved in the gluconeogenesis. Catalyzes stereospecifically the conversion of dihydroxyacetone phosphate (DHAP) to D-glyceraldehyde-3-phosphate (G3P). This chain is Triosephosphate isomerase, found in Dechloromonas aromatica (strain RCB).